A 613-amino-acid chain; its full sequence is Myrcene synthase, chloroplastic (613 aa).

The N-terminal 46 residues, 1 to 46, are a transit peptide targeting the chloroplast; that stretch reads MQCMAVHQFAPLLSLLNCSRISSDFGRLFTPKTSTKSRSSTCHPIQ. Residues R324, D361, and D365 each coordinate (2E)-geranyl diphosphate. Mg(2+)-binding residues include D361 and D365. The DDXXD motif signature appears at 361–365; sequence DDIYD. The chain crosses the membrane as a helical span at residues 455–475; it reads IEMAWLSIGGPVILVHAYFCF. The (2E)-geranyl diphosphate site is built by R503 and D506. The Mg(2+) site is built by D506, T510, and E514.

It belongs to the terpene synthase family. Tpsb subfamily. Requires Mg(2+) as cofactor. Mn(2+) serves as cofactor. In terms of tissue distribution, expressed in trichomes.

The protein resides in the plastid. Its subcellular location is the chloroplast membrane. It catalyses the reaction (2E)-geranyl diphosphate = beta-myrcene + diphosphate. Its pathway is secondary metabolite biosynthesis; terpenoid biosynthesis. Its function is as follows. Monoterpene synthase that catalyzes the formation of myrcene. Can use geranyl diphosphate as substrate, but not farnesyl diphosphate or geranylgeranyl diphosphate. The polypeptide is Myrcene synthase, chloroplastic (Humulus lupulus (European hop)).